The sequence spans 443 residues: ATP-dependent protease ATPase subunit HslU (443 aa).

Residues Ile-18, 60–65 (GVGKTE), Asp-256, Glu-321, and Arg-393 contribute to the ATP site.

It belongs to the ClpX chaperone family. HslU subfamily. A double ring-shaped homohexamer of HslV is capped on each side by a ring-shaped HslU homohexamer. The assembly of the HslU/HslV complex is dependent on binding of ATP.

Its subcellular location is the cytoplasm. In terms of biological role, ATPase subunit of a proteasome-like degradation complex; this subunit has chaperone activity. The binding of ATP and its subsequent hydrolysis by HslU are essential for unfolding of protein substrates subsequently hydrolyzed by HslV. HslU recognizes the N-terminal part of its protein substrates and unfolds these before they are guided to HslV for hydrolysis. The chain is ATP-dependent protease ATPase subunit HslU from Shigella dysenteriae serotype 1 (strain Sd197).